A 331-amino-acid chain; its full sequence is CRISPR-associated endonuclease Cas1 (331 aa).

Residues glutamate 166, histidine 228, and aspartate 243 each contribute to the Mn(2+) site.

The protein belongs to the CRISPR-associated endonuclease Cas1 family. In terms of assembly, homodimer, forms a heterotetramer with a Cas2 homodimer. Mg(2+) is required as a cofactor. The cofactor is Mn(2+).

Its function is as follows. CRISPR (clustered regularly interspaced short palindromic repeat), is an adaptive immune system that provides protection against mobile genetic elements (viruses, transposable elements and conjugative plasmids). CRISPR clusters contain spacers, sequences complementary to antecedent mobile elements, and target invading nucleic acids. CRISPR clusters are transcribed and processed into CRISPR RNA (crRNA). Acts as a dsDNA endonuclease. Involved in the integration of spacer DNA into the CRISPR cassette. In Hyperthermus butylicus (strain DSM 5456 / JCM 9403 / PLM1-5), this protein is CRISPR-associated endonuclease Cas1.